A 208-amino-acid polypeptide reads, in one-letter code: Small ribosomal subunit protein uS4 (208 aa).

Positions 98 to 158 constitute an S4 RNA-binding domain; it reads RRLDNVVYRL…EKNRKISVVA (61 aa).

Belongs to the universal ribosomal protein uS4 family. Part of the 30S ribosomal subunit. Contacts protein S5. The interaction surface between S4 and S5 is involved in control of translational fidelity.

Its function is as follows. One of the primary rRNA binding proteins, it binds directly to 16S rRNA where it nucleates assembly of the body of the 30S subunit. With S5 and S12 plays an important role in translational accuracy. The protein is Small ribosomal subunit protein uS4 of Lawsonia intracellularis (strain PHE/MN1-00).